Reading from the N-terminus, the 414-residue chain is Proton/glutamate-aspartate symporter (414 aa).

Residues 1–3 (MKK) are Cytoplasmic-facing. The chain crosses the membrane as a helical span at residues 4-24 (LIAFQILIALAVGAVIGHFFP). Residues 25–42 (DFGMALRPVGDGFIRLIK) lie on the Extracellular side of the membrane. The chain crosses the membrane as a helical span at residues 43–63 (MIVVPIVFSTIVIGAAGSGSM). Over 64–73 (KKMGSLGIKT) the chain is Cytoplasmic. A helical transmembrane segment spans residues 74–94 (IIWFEVITTLVLGLGLLLANV). At 95–144 (LKPGVGLDLSHLAKKDIHELSGYTDKVVDFKQMILDIIPTNIIDVMARND) the chain is on the extracellular side. Residues 145 to 165 (LLAVIFFAILFGVAAAGIGKA) form a helical membrane-spanning segment. The Cytoplasmic segment spans residues 166-182 (SEPVMKFFESTAQIMFK). A helical membrane pass occupies residues 183–203 (LTQIVMVTAPIGVLALMAASV). Residues 204–219 (GQYGIELLLPMFKLVG) are Extracellular-facing. A helical transmembrane segment spans residues 220 to 240 (TVFLGLFLILFVLFPLVGLIF). Gln241 is a topological domain (cytoplasmic). Residues 242 to 262 (IKYFEVLKMIWDLFLIAFSTT) traverse the membrane as a helical segment. The Extracellular portion of the chain corresponds to 263 to 300 (STETILPQLMDRMEKYGCPKRVVSFVVPSGLSLNCDGS). A helical transmembrane segment spans residues 301-321 (SLYLSVSCIFLAQAFQVDMTL). Residues 322–324 (SQQ) are Cytoplasmic-facing. The next 2 helical transmembrane spans lie at 325-345 (LLMM…PSGS) and 346-366 (LVVL…VAII). The Cytoplasmic portion of the chain corresponds to 367 to 414 (AGVDRVMDMARTGVNVPGHAIACIVVSKWEKAFRQKEWVSANSQTESI).

This sequence belongs to the dicarboxylate/amino acid:cation symporter (DAACS) (TC 2.A.23) family.

It localises to the cell membrane. With respect to regulation, glutamate uptake is inhibited by beta-hydroxyaspartate and cysteic acid. Catalyzes the proton-dependent, binding-protein-independent transport of glutamate and aspartate. The sequence is that of Proton/glutamate-aspartate symporter from Bacillus subtilis (strain 168).